Consider the following 251-residue polypeptide: Low molecular mass lipoprotein PBMHPC-21 (251 aa).

Residues 1-16 form the signal peptide; the sequence is MKFVVVFASCVLAVSA.

The protein belongs to the 30 kDa lipoprotein family.

The protein resides in the secreted. The protein is Low molecular mass lipoprotein PBMHPC-21 of Bombyx mori (Silk moth).